Reading from the N-terminus, the 622-residue chain is Apical membrane antigen 1 (622 aa).

Residues 1–24 (MRKLYCVLLLSAFEFTYMINFGRG) form the signal peptide. Topologically, residues 25-546 (QNYWEHPYQN…EHKPTYDNMK (522 aa)) are extracellular. 5 disulfide bridges follow: Cys149–Cys302, Cys217–Cys247, Cys263–Cys275, Cys320–Cys418, and Cys337–Cys409. Residue Asn162 is glycosylated (N-linked (GlcNAc...) asparagine). 5 N-linked (GlcNAc...) asparagine glycosylation sites follow: Asn286, Asn371, Asn421, Asn422, and Asn499. Disulfide bonds link Cys443-Cys502, Cys490-Cys507, and Cys492-Cys509. The chain crosses the membrane as a helical span at residues 547–567 (IIIASSAAVAVLATILMVYLY). At 568–622 (KRKGNAEKYDKMDQPQDYGKSTSRNDEMLDPEASFWGEEKRASHTTPVLMEKPYY) the chain is on the cytoplasmic side. The interval 577–607 (DKMDQPQDYGKSTSRNDEMLDPEASFWGEEK) is disordered.

The protein belongs to the apicomplexan parasites AMA1 family.

The protein localises to the membrane. Its function is as follows. Involved in parasite invasion of erythrocytes. This Plasmodium falciparum (isolate Camp / Malaysia) protein is Apical membrane antigen 1 (AMA-1).